Here is a 602-residue protein sequence, read N- to C-terminus: MFS-type efflux transporter pyiT (602 aa).

Residues 1–33 (MEKAKDSLPTTGDPVPSQGTINPVDETGGSASD) are disordered. The next 7 helical transmembrane spans lie at 43–63 (FWFTFSSLVLTAFLSALEGSV), 123–143 (WLTIGAVVIFTVGSGICGGAT), 156–176 (GLGSAGINMLVELILCDLLPL), 185–205 (IIFMFVILGSVIGPFLGGILV), 212–232 (WVFYINIPFSGVCVVLLFFFL), 251–271 (FFGNFLLAASVGSCLFALTYG), and 282–302 (IIVSLVLGLLGHVAFMFFEAS). The N-linked (GlcNAc...) asparagine glycan is linked to Asn-317. 6 helical membrane-spanning segments follow: residues 325-345 (IATFLQTLVSFWVLYFLPLYF), 357-377 (GVMLLPFSVVYALSSLAGGAL), 386-406 (NIHFASFALMTIGMGTLTILN), 410-430 (SLAVIVVLEMIVALAIGVPTA), 451-471 (TFAFLRSVGTIWGVSIPAAIF), and 524-544 (LERVWQIGIVFAGVGFLVIFL). A compositionally biased stretch (polar residues) spans 564 to 585 (IPQTAADNSASRPNTINDTASQ). The interval 564–602 (IPQTAADNSASRPNTINDTASQAPILKQRRSTNQERETV) is disordered. A glycan (N-linked (GlcNAc...) asparagine) is linked at Asn-580.

It belongs to the major facilitator superfamily.

It is found in the cell membrane. MFS-type efflux transporter; part of the gene cluster that mediates the biosynthesis of the mycotoxin pyrichalasin H, a tyrosine-derived cytochalasan that inhibits the growth of rice seedlings, but also inhibits lymphocyte capping and actin polymerization and alters cell morphology. Pyrichalasin H is indicated as the responsible agent for the genus-specific pathogenicity of M.grisea toward crabgrass. PyiT might be involved in the excretion of pyrichalasin H. The protein is MFS-type efflux transporter pyiT of Pyricularia grisea (Crabgrass-specific blast fungus).